Here is a 196-residue protein sequence, read N- to C-terminus: Small ribosomal subunit protein uS4c (196 aa).

The interval 16-36 is disordered; sequence GALPGLTRKTPKSGSNLKKKF. The S4 RNA-binding domain maps to 89–169; the sequence is MRLDNILFRL…LPKHLTIDTL (81 aa).

This sequence belongs to the universal ribosomal protein uS4 family. As to quaternary structure, part of the 30S ribosomal subunit. Contacts protein S5. The interaction surface between S4 and S5 is involved in control of translational fidelity.

It is found in the plastid. The protein resides in the chloroplast. Functionally, one of the primary rRNA binding proteins, it binds directly to 16S rRNA where it nucleates assembly of the body of the 30S subunit. Its function is as follows. With S5 and S12 plays an important role in translational accuracy. The polypeptide is Small ribosomal subunit protein uS4c (rps4) (Brachypodium pinnatum (Tor grass)).